Consider the following 3564-residue polypeptide: CUB and sushi domain-containing protein 1 (3564 aa).

Residues 1 to 26 form the signal peptide; the sequence is MTAWRRFQSLLLLLGLLVLCARLLTA. Topologically, residues 27–3487 are extracellular; that stretch reads AKGQNCGGLV…SHYHGTSSGS (3461 aa). 10 disulfide bridges follow: cysteine 32-cysteine 58, cysteine 145-cysteine 185, cysteine 171-cysteine 202, cysteine 208-cysteine 234, cysteine 349-cysteine 389, cysteine 375-cysteine 406, cysteine 411-cysteine 437, cysteine 527-cysteine 567, cysteine 553-cysteine 580, and cysteine 584-cysteine 610. A CUB 1 domain is found at 32 to 140; the sequence is CGGLVQGPNG…QGFKALYEVL (109 aa). Asparagine 40 and asparagine 57 each carry an N-linked (GlcNAc...) asparagine glycan. Residues 143–204 form the Sushi 1 domain; the sequence is HTCGNPGEIL…WDFPAPFCRA (62 aa). The region spanning 208–312 is the CUB 2 domain; that stretch reads CGGTLRGTSS…KGFNAQFQVK (105 aa). A Sushi 2 domain is found at 347–408; it reads DMCPDPGIPE…WSDHRPICRA (62 aa). Residues 411-522 form the CUB 3 domain; the sequence is CGSNLRGPSG…PGFKAVYQEI (112 aa). The Sushi 3 domain maps to 525-582; that stretch reads GGCGDPGIPAYGKRTGSSFLHGDTLTFECPAAFELVGERVITCQQNNQWSGNKPSCVF. Residues 584-692 enclose the CUB 4 domain; sequence CFFNFTASSG…RGFNITYTTF (109 aa). Asparagine 587 and asparagine 686 each carry an N-linked (GlcNAc...) asparagine glycan. Residues 695-756 form the Sushi 4 domain; that stretch reads NECHDPGIPI…WSSTVPRCEA (62 aa). 6 disulfide bridges follow: cysteine 697-cysteine 738, cysteine 723-cysteine 754, cysteine 758-cysteine 784, cysteine 873-cysteine 913, cysteine 899-cysteine 926, and cysteine 930-cysteine 956. Residues 758–866 enclose the CUB 5 domain; sequence CGGHLTASSG…IGFLIHYESV (109 aa). Residues 871–928 enclose the Sushi 5 domain; sequence DSCLDPGIPVNGHRHGGDFGIRSTVTFSCDPGYTLSDDEPLVCERNHQWNHALPSCDA. Residues 930–1040 form the CUB 6 domain; sequence CGGYIQGKSG…EGFNITFSEY (111 aa). N-linked (GlcNAc...) asparagine glycosylation is found at asparagine 955, asparagine 1015, and asparagine 1034. The Sushi 6 domain occupies 1043-1102; sequence EPCDDPGVPAFSRRIGFHFGVGDSLTFSCFLGYRLEGATKLTCLGGGRRVWSAPLPRCVA. 3 disulfides stabilise this stretch: cysteine 1045/cysteine 1085, cysteine 1071/cysteine 1100, and cysteine 1104/cysteine 1130. A CUB 7 domain is found at 1104 to 1212; the sequence is CGASVKGNEG…QGFQLTYTSF (109 aa). N-linked (GlcNAc...) asparagine glycans are attached at residues asparagine 1184 and asparagine 1197. One can recognise a Sushi 7 domain in the interval 1215-1275; that stretch reads VKCEDPGIPN…WDKPLPSCIA (61 aa). Intrachain disulfides connect cysteine 1217/cysteine 1258, cysteine 1244/cysteine 1273, cysteine 1277/cysteine 1304, cysteine 1391/cysteine 1431, cysteine 1417/cysteine 1447, cysteine 1451/cysteine 1477, cysteine 1564/cysteine 1604, cysteine 1590/cysteine 1621, cysteine 1625/cysteine 1651, cysteine 1741/cysteine 1781, cysteine 1767/cysteine 1798, and cysteine 1802/cysteine 1828. The region spanning 1277-1386 is the CUB 8 domain; the sequence is CGGQIHAATS…SGFSIQFSTS (110 aa). Positions 1389 to 1449 constitute a Sushi 8 domain; sequence ATCNDPGMPQ…WQPDPPTCIA (61 aa). Asparagine 1399 is a glycosylation site (N-linked (GlcNAc...) asparagine). Positions 1451-1559 constitute a CUB 9 domain; that stretch reads CGGNLTGPAG…SGFAIEFKEK (109 aa). N-linked (GlcNAc...) asparagine glycosylation is found at asparagine 1454 and asparagine 1572. The Sushi 9 domain occupies 1562–1623; the sequence is EACFDPGNIM…WDQVLPSCNA (62 aa). Residues 1625-1733 enclose the CUB 10 domain; the sequence is CGGQYTGSEG…RGFHFVYQAV (109 aa). Asparagine 1644 is a glycosylation site (N-linked (GlcNAc...) asparagine). Residues 1739 to 1800 enclose the Sushi 10 domain; the sequence is TQCSSVPEPR…WNDTIPSCVV (62 aa). 3 N-linked (GlcNAc...) asparagine glycosylation sites follow: asparagine 1792, asparagine 1805, and asparagine 1882. The CUB 11 domain maps to 1802-1910; it reads CSGNFTQRRG…AGFHLEYKTV (109 aa). In terms of domain architecture, Sushi 11 spans 1913–1972; it reads AACQEPALPSNSIKIGDRYMVNDVLSFQCEPGYTLQGRSHISCMPGTVRRWNYPSPLCIA. Disulfide bonds link cysteine 1915–cysteine 1955, cysteine 1941–cysteine 1970, and cysteine 1974–cysteine 2000. The 109-residue stretch at 1974–2082 folds into the CUB 12 domain; it reads CGGTLSTLGG…QGFKLAYQAY (109 aa). The N-linked (GlcNAc...) asparagine glycan is linked to asparagine 2018. Residues 2085–2144 enclose the Sushi 12 domain; the sequence is QNCPDPPPFQNGYMINSDYSVGQSVSFECYPGYILIGHPVLTCQHGINRNWNYPFPRCDA. Cystine bridges form between cysteine 2087/cysteine 2127, cysteine 2113/cysteine 2142, and cysteine 2146/cysteine 2172. Residues 2146-2257 form the CUB 13 domain; it reads CGYNVTSQNG…LNFHAFQLKK (112 aa). Residues asparagine 2149, asparagine 2154, and asparagine 2187 are each glycosylated (N-linked (GlcNAc...) asparagine). A Sushi 13 domain is found at 2256–2317; that stretch reads KKCQPPPAVP…FEGSLPTCEA (62 aa). 3 disulfides stabilise this stretch: cysteine 2258–cysteine 2300, cysteine 2286–cysteine 2315, and cysteine 2319–cysteine 2347. One can recognise a CUB 14 domain in the interval 2319-2430; it reads CPANEVRTGS…KGFKIRYAAP (112 aa). 6 N-linked (GlcNAc...) asparagine glycosylation sites follow: asparagine 2358, asparagine 2394, asparagine 2400, asparagine 2445, asparagine 2470, and asparagine 2503. Sushi domains are found at residues 2430 to 2492, 2493 to 2554, 2555 to 2619, 2620 to 2677, 2678 to 2735, 2736 to 2793, 2794 to 2856, 2857 to 2914, 2918 to 2975, 2976 to 3034, 3035 to 3094, 3095 to 3152, 3153 to 3210, 3214 to 3272, and 3273 to 3332; these read PYCS…LCQA, VSCG…TCKP, VACP…SCRV, ISCG…RCLA, GHCG…VCVP, ITCG…TCRV, VNCS…KCLA, ISCG…HCTG, GFCG…VCEA, VSCG…DCTI, ISCG…VCKA, VLCP…QCLP, VFCG…TCID, NTCP…ECIP, and HACR…VCKS. Cystine bridges form between cysteine 2432–cysteine 2473, cysteine 2459–cysteine 2490, cysteine 2495–cysteine 2537, cysteine 2521–cysteine 2552, cysteine 2557–cysteine 2602, cysteine 2588–cysteine 2617, cysteine 2622–cysteine 2662, cysteine 2648–cysteine 2675, cysteine 2680–cysteine 2720, cysteine 2706–cysteine 2733, cysteine 2738–cysteine 2778, and cysteine 2764–cysteine 2791. An N-linked (GlcNAc...) asparagine glycan is attached at asparagine 2605. N-linked (GlcNAc...) asparagine glycosylation is found at asparagine 2750 and asparagine 2761. An N-linked (GlcNAc...) asparagine glycan is attached at asparagine 2795. 18 cysteine pairs are disulfide-bonded: cysteine 2796-cysteine 2841, cysteine 2827-cysteine 2854, cysteine 2859-cysteine 2899, cysteine 2885-cysteine 2912, cysteine 2920-cysteine 2960, cysteine 2946-cysteine 2973, cysteine 2978-cysteine 3019, cysteine 3005-cysteine 3032, cysteine 3037-cysteine 3079, cysteine 3063-cysteine 3092, cysteine 3097-cysteine 3137, cysteine 3123-cysteine 3150, cysteine 3155-cysteine 3195, cysteine 3181-cysteine 3208, cysteine 3216-cysteine 3257, cysteine 3243-cysteine 3270, cysteine 3275-cysteine 3317, and cysteine 3302-cysteine 3330. Asparagine 2894 is a glycosylation site (N-linked (GlcNAc...) asparagine). Residue asparagine 2963 is glycosylated (N-linked (GlcNAc...) asparagine). N-linked (GlcNAc...) asparagine glycans are attached at residues asparagine 3022 and asparagine 3056. N-linked (GlcNAc...) asparagine glycosylation occurs at asparagine 3105. Asparagine 3228 and asparagine 3260 each carry an N-linked (GlcNAc...) asparagine glycan. Residues asparagine 3339, asparagine 3379, and asparagine 3386 are each glycosylated (N-linked (GlcNAc...) asparagine). A helical transmembrane segment spans residues 3488 to 3508; it reads VAAAILVPFFALILSGFAFYL. The Cytoplasmic segment spans residues 3509–3564; sequence YKHRTRPKVQYNGYAGHENSNGQASFENPMYDTNLKPTEAKAVRFDTTLNTVCTVV.

The protein belongs to the CSMD family. As to expression, weakly expressed in most tissues, except in brain. Expressed at intermediate level in brain, including cerebellum, substantia nigra, hippocampus and fetal brain.

The protein resides in the membrane. Potential suppressor of squamous cell carcinomas. This Homo sapiens (Human) protein is CUB and sushi domain-containing protein 1 (CSMD1).